A 1220-amino-acid chain; its full sequence is Deubiquitinating protein VCPIP1 (1220 aa).

Positions 1–19 (MSQPPPPPPLPPPPPPPEA) are enriched in pro residues. Residues 1–40 (MSQPPPPPPLPPPPPPPEAPQTSSSLAAAASPGGLSKRRD) form a disordered region. A compositionally biased stretch (low complexity) spans 20–35 (PQTSSSLAAAASPGGL). The region spanning 207–360 (LIPVHVDGDG…RNHYIPLVGI (154 aa)) is the OTU domain. Asp215 is an active-site residue. The Nucleophile role is filled by Cys218. The active site involves His353. Position 407 is an N6-acetyllysine (Lys407). Disordered stretches follow at residues 724-778 (SVMQ…KIRI) and 988-1008 (EATTRSRESSPSHGLLKLGSG). Phosphoserine is present on residues Ser746 and Ser756. The span at 754–770 (PSSAPATPTKAPYSPTT) shows a compositional bias: low complexity. The residue at position 762 (Thr762) is a Phosphothreonine. Phosphoserine occurs at positions 767, 993, 997, and 1076. 2 disordered regions span residues 1113–1140 (SSIQASMDKHLRDQSAEQAPSDLSQRKV) and 1185–1220 (FATRSKAQKENSMEEPEEMDSQDAETTNTTEPMDHS). Phosphoserine occurs at positions 1196 and 1205. Over residues 1197-1207 (MEEPEEMDSQD) the composition is skewed to acidic residues. Polar residues predominate over residues 1208–1220 (AETTNTTEPMDHS).

As to quaternary structure, binds VCP and the ternary complex containing STX5A, NSFL1C and VCP. Post-translationally, phosphorylated at Ser-1205 by ATM or ATR following induction of covalent DNA-protein cross-links (DPCs).

It is found in the nucleus. Its subcellular location is the cytoplasm. The protein localises to the endoplasmic reticulum. The protein resides in the golgi apparatus. It localises to the golgi stack. The catalysed reaction is Thiol-dependent hydrolysis of ester, thioester, amide, peptide and isopeptide bonds formed by the C-terminal Gly of ubiquitin (a 76-residue protein attached to proteins as an intracellular targeting signal).. In terms of biological role, deubiquitinating enzyme involved in DNA repair and reassembly of the Golgi apparatus and the endoplasmic reticulum following mitosis. Necessary for VCP-mediated reassembly of Golgi stacks after mitosis. Plays a role in VCP-mediated formation of transitional endoplasmic reticulum (tER). Mediates dissociation of the ternary complex containing STX5A, NSFL1C and VCP. Also involved in DNA repair following phosphorylation by ATM or ATR: acts by catalyzing deubiquitination of SPRTN, thereby promoting SPRTN recruitment to chromatin and subsequent proteolytic cleavage of covalent DNA-protein cross-links (DPCs). Hydrolyzes 'Lys-11'- and 'Lys-48'-linked polyubiquitin chains. This is Deubiquitinating protein VCPIP1 from Mus musculus (Mouse).